A 1388-amino-acid polypeptide reads, in one-letter code: DNA-directed RNA polymerase subunit beta' (1388 aa).

Residues Cys76, Cys78, Cys91, and Cys94 each coordinate Zn(2+). Asp467, Asp469, and Asp471 together coordinate Mg(2+). 4 residues coordinate Zn(2+): Cys810, Cys884, Cys891, and Cys894.

It belongs to the RNA polymerase beta' chain family. In terms of assembly, the RNAP catalytic core consists of 2 alpha, 1 beta, 1 beta' and 1 omega subunit. When a sigma factor is associated with the core the holoenzyme is formed, which can initiate transcription. Mg(2+) serves as cofactor. The cofactor is Zn(2+).

The catalysed reaction is RNA(n) + a ribonucleoside 5'-triphosphate = RNA(n+1) + diphosphate. Its function is as follows. DNA-dependent RNA polymerase catalyzes the transcription of DNA into RNA using the four ribonucleoside triphosphates as substrates. The polypeptide is DNA-directed RNA polymerase subunit beta' (Lawsonia intracellularis (strain PHE/MN1-00)).